Reading from the N-terminus, the 563-residue chain is Cytochrome b (563 aa).

12 helical membrane-spanning segments follow: residues 36-61 (SYWLGAMVAASFAYTIITGLFLLLYY), 81-104 (SVLLFSHLYGSYIMILLAYIHMFR), 119-141 (WVTGVLLLALTLGASFFGYSLVS), 193-220 (RLLGWHIIMVFLLGVLFLFHFMLSERYG), 255-276 (LSIVLITWGIILFVPNLLANIN), 326-345 (ILTIALLVVGLVILMLLPFL), 358-379 (FWTWIMTTLAVYLVELSVWGYL), 387-409 (TSAQIEFLGPPLVIIGIIVYLWP), 436-454 (ILLGAVGTLSFAATLFNFI), 458-476 (TLINGIILVPLGLFAIYAL), 505-527 (IAFFGIIALFVVSLVLLGLMWTL), and 539-557 (MDLGVILLLWGVAIQLYHY). His87 and His101 together coordinate heme. 2 residues coordinate heme: His198 and His212.

This sequence belongs to the cytochrome b family. As to quaternary structure, it is a component of at least 2 distinct terminal oxidases, the quinol oxidase (SoxABC) and the alternate quinol oxidase with the core components SoxM and a Rieske Fe-S protein.

The protein resides in the cell membrane. Binds 2 heme groups (b586 and b606) which are not covalently bound to the protein. The chain is Cytochrome b (soxC) from Sulfolobus acidocaldarius (strain ATCC 33909 / DSM 639 / JCM 8929 / NBRC 15157 / NCIMB 11770).